A 2157-amino-acid chain; its full sequence is DExH-box ATP-dependent RNA helicase DExH14 (2157 aa).

Residues 374-394 (KAASNTQSRMPTYGTQVTVQT) form a disordered region. A compositionally biased stretch (polar residues) spans 375-394 (AASNTQSRMPTYGTQVTVQT). Positions 517–699 (QTVYHTNENI…FLRVNTDTGL (183 aa)) constitute a Helicase ATP-binding 1 domain. 530-537 (APTGAGKT) is a binding site for ATP. Positions 641–644 (DEVH) match the DEVH box motif. The Helicase C-terminal 1 domain occupies 734 to 932 (CYKKVVDSIK…SLKDNLNAEV (199 aa)). The 308-residue stretch at 1008 to 1315 (CTELGRVASH…LHAETYFTIS (308 aa)) folds into the SEC63 1 domain. A Helicase ATP-binding 2 domain is found at 1365–1540 (HVLYHTDNNV…WLGVGEIGLF (176 aa)). 1378–1385 (APTGSGKT) is an ATP binding site. A DEIH box motif is present at residues 1482 to 1485 (DEIH). The Helicase C-terminal 2 domain maps to 1571–1780 (NKPAYAAICT…GTIGNKEDAV (210 aa)). Residues 1839–2150 (PTMLGTIASQ…YLGFEQEHSI (312 aa)) form the SEC63 2 domain.

Belongs to the DExH box helicase family.

The protein localises to the nucleus. The catalysed reaction is ATP + H2O = ADP + phosphate + H(+). In terms of biological role, RNA helicase that plays an essential role in pre-mRNA splicing as component of the U5 snRNP and U4/U6-U5 tri-snRNP complexes. Involved in spliceosome assembly, activation and disassembly. In Arabidopsis thaliana (Mouse-ear cress), this protein is DExH-box ATP-dependent RNA helicase DExH14.